The primary structure comprises 431 residues: Adenylosuccinate synthetase (431 aa).

Residues 13-19 (GDEGKGK) and 41-43 (GHT) each bind GTP. D14 functions as the Proton acceptor in the catalytic mechanism. Residues D14 and G41 each contribute to the Mg(2+) site. IMP contacts are provided by residues 14–17 (DEGK), 39–42 (NAGH), T130, R144, Q225, T240, and R304. The active-site Proton donor is H42. Residue 300–306 (ATTGRKR) coordinates substrate. Residues R306, 332-334 (KLD), and 415-417 (STG) each bind GTP.

The protein belongs to the adenylosuccinate synthetase family. As to quaternary structure, homodimer. Requires Mg(2+) as cofactor.

Its subcellular location is the cytoplasm. It catalyses the reaction IMP + L-aspartate + GTP = N(6)-(1,2-dicarboxyethyl)-AMP + GDP + phosphate + 2 H(+). It functions in the pathway purine metabolism; AMP biosynthesis via de novo pathway; AMP from IMP: step 1/2. Functionally, plays an important role in the de novo pathway of purine nucleotide biosynthesis. Catalyzes the first committed step in the biosynthesis of AMP from IMP. In Shewanella amazonensis (strain ATCC BAA-1098 / SB2B), this protein is Adenylosuccinate synthetase.